A 182-amino-acid polypeptide reads, in one-letter code: UPF0316 protein lp_1140 (182 aa).

3 consecutive transmembrane segments (helical) span residues 1 to 21, 36 to 56, and 62 to 82; these read MHIDMGMLVLIFIINFAYITL, FAAFASVIEITIYVLGLSLVL, and PINLVVYALGYGVGVYVGMVI.

Belongs to the UPF0316 family.

The protein localises to the cell membrane. In Lactiplantibacillus plantarum (strain ATCC BAA-793 / NCIMB 8826 / WCFS1) (Lactobacillus plantarum), this protein is UPF0316 protein lp_1140.